Consider the following 82-residue polypeptide: Small ribosomal subunit protein bS18 (82 aa).

It belongs to the bacterial ribosomal protein bS18 family. Part of the 30S ribosomal subunit. Forms a tight heterodimer with protein bS6.

Binds as a heterodimer with protein bS6 to the central domain of the 16S rRNA, where it helps stabilize the platform of the 30S subunit. The sequence is that of Small ribosomal subunit protein bS18 from Chlamydia felis (strain Fe/C-56) (Chlamydophila felis).